We begin with the raw amino-acid sequence, 917 residues long: Protein translocase subunit SecA (917 aa).

ATP-binding positions include glutamine 87, 105 to 109 (GEGKT), and aspartate 513. The disordered stretch occupies residues 834-917 (EEQMNEMEKR…YKSCHGKLTG (84 aa)). Positions 839 to 852 (EMEKRRQEEAERQR) are enriched in basic and acidic residues. The segment covering 862 to 876 (APSQLAAPATPATPE) has biased composition (low complexity). Zn(2+) is bound by residues cysteine 900, cysteine 902, cysteine 911, and histidine 912.

This sequence belongs to the SecA family. As to quaternary structure, monomer and homodimer. Part of the essential Sec protein translocation apparatus which comprises SecA, SecYEG and auxiliary proteins SecDF-YajC and YidC. The cofactor is Zn(2+).

It is found in the cell inner membrane. Its subcellular location is the cytoplasm. The enzyme catalyses ATP + H2O + cellular proteinSide 1 = ADP + phosphate + cellular proteinSide 2.. In terms of biological role, part of the Sec protein translocase complex. Interacts with the SecYEG preprotein conducting channel. Has a central role in coupling the hydrolysis of ATP to the transfer of proteins into and across the cell membrane, serving both as a receptor for the preprotein-SecB complex and as an ATP-driven molecular motor driving the stepwise translocation of polypeptide chains across the membrane. The sequence is that of Protein translocase subunit SecA from Saccharophagus degradans (strain 2-40 / ATCC 43961 / DSM 17024).